The primary structure comprises 714 residues: Fatty acid oxidation complex subunit alpha (714 aa).

The tract at residues Met1–Pro190 is enoyl-CoA hydratase. Residues Ala306–Gln714 are 3-hydroxyacyl-CoA dehydrogenase.

It in the N-terminal section; belongs to the enoyl-CoA hydratase/isomerase family. The protein in the central section; belongs to the 3-hydroxyacyl-CoA dehydrogenase family. In terms of assembly, heterotetramer of two alpha chains (FadJ) and two beta chains (FadI).

It is found in the cytoplasm. It carries out the reaction a (3S)-3-hydroxyacyl-CoA = a (2E)-enoyl-CoA + H2O. It catalyses the reaction a 4-saturated-(3S)-3-hydroxyacyl-CoA = a (3E)-enoyl-CoA + H2O. The enzyme catalyses a (3S)-3-hydroxyacyl-CoA + NAD(+) = a 3-oxoacyl-CoA + NADH + H(+). The catalysed reaction is (3S)-3-hydroxybutanoyl-CoA = (3R)-3-hydroxybutanoyl-CoA. Its pathway is lipid metabolism; fatty acid beta-oxidation. Its function is as follows. Catalyzes the formation of a hydroxyacyl-CoA by addition of water on enoyl-CoA. Also exhibits 3-hydroxyacyl-CoA epimerase and 3-hydroxyacyl-CoA dehydrogenase activities. In Escherichia coli O127:H6 (strain E2348/69 / EPEC), this protein is Fatty acid oxidation complex subunit alpha.